Reading from the N-terminus, the 207-residue chain is Large ribosomal subunit protein uL4 (207 aa).

The segment at 52–75 (KNRSAVRGGGKKPWRQKGTGRARQ) is disordered. Residues 60 to 71 (GGKKPWRQKGTG) are compositionally biased toward basic residues.

The protein belongs to the universal ribosomal protein uL4 family. As to quaternary structure, part of the 50S ribosomal subunit.

Functionally, one of the primary rRNA binding proteins, this protein initially binds near the 5'-end of the 23S rRNA. It is important during the early stages of 50S assembly. It makes multiple contacts with different domains of the 23S rRNA in the assembled 50S subunit and ribosome. Its function is as follows. Forms part of the polypeptide exit tunnel. In Limosilactobacillus fermentum (strain NBRC 3956 / LMG 18251) (Lactobacillus fermentum), this protein is Large ribosomal subunit protein uL4.